The primary structure comprises 550 residues: MKFLKRGVALALLAAFALTTQPAQAYEKDKTYKITILHTNDHHGHFWRSEYGEYGLAAQKTLVDSIRKEVAQEGGGVLLLSGGDINTGVPESDLQDAEPDFRGMNLIGYDAMAVGNHEFDNPLTVLRQQEKWAKFPFLSANIYQKSTGERLFKPWAIFTRQDIKIAVIGLTTDDTAKIGNPEYFTDIEFRKPAEEAKVVIQELNMNEKPDVIIATTHMGHYDNGDHGSNAPGDVEMARSLPAGSLAMIVGGHSQDPVCMASENKKQVNYVPGTPCAPDKQNGIWIVQAHEWGKYVGRADFEFRNGEMKMVNYQLIPVNLKKKVTWDNGKSERVLYTPEIAENPQMLLLLTPFQNKGKVQLEVKIGSVNGLLEGDRSKVRFVQTNMGRVILAAQIARTGADFGVMSGGGIRDSIEAGDITYKSVLKVQPFGNIVVYADMSGKEVVDYLTRVAQMKPDSGAYPQLANVSFVAKEGKLTDLKIKGEPVDPAKTYRMATLSFNATGGDGYPRIDNKPGYVNTGFIDAEVLKEFIQQNSPLDAAAFTPKGEVSWL.

The first 25 residues, 1–25, serve as a signal peptide directing secretion; that stretch reads MKFLKRGVALALLAAFALTTQPAQA. Positions 41, 43, 84, 116, 217, 252, and 254 each coordinate Zn(2+). Cys-258 and Cys-275 are joined by a disulfide. Substrate is bound by residues Phe-429 and 498-504; that span reads FNATGGD.

This sequence belongs to the 5'-nucleotidase family. Monomer. Zn(2+) is required as a cofactor.

The protein localises to the periplasm. It carries out the reaction UDP-sugar + H2O = UMP + alpha-D-aldose 1-phosphate.. It catalyses the reaction a ribonucleoside 5'-phosphate + H2O = a ribonucleoside + phosphate. Its function is as follows. Degradation of external UDP-glucose to uridine monophosphate and glucose-1-phosphate, which can then be used by the cell. This chain is Protein UshA (ushA), found in Salmonella pullorum.